Consider the following 71-residue polypeptide: Translation initiation factor IF-1 (71 aa).

One can recognise an S1-like domain in the interval 1 to 71 (MSKDDLIQFT…LTKGRVIHRH (71 aa)).

It belongs to the IF-1 family. As to quaternary structure, component of the 30S ribosomal translation pre-initiation complex which assembles on the 30S ribosome in the order IF-2 and IF-3, IF-1 and N-formylmethionyl-tRNA(fMet); mRNA recruitment can occur at any time during PIC assembly.

Its subcellular location is the cytoplasm. Its function is as follows. One of the essential components for the initiation of protein synthesis. Stabilizes the binding of IF-2 and IF-3 on the 30S subunit to which N-formylmethionyl-tRNA(fMet) subsequently binds. Helps modulate mRNA selection, yielding the 30S pre-initiation complex (PIC). Upon addition of the 50S ribosomal subunit IF-1, IF-2 and IF-3 are released leaving the mature 70S translation initiation complex. This is Translation initiation factor IF-1 from Rickettsia akari (strain Hartford).